The following is a 60-amino-acid chain: DNA-directed RNA polymerase subunit Rpo6 (60 aa).

Belongs to the archaeal Rpo6/eukaryotic RPB6 RNA polymerase subunit family. As to quaternary structure, part of the RNA polymerase complex.

Its subcellular location is the cytoplasm. The enzyme catalyses RNA(n) + a ribonucleoside 5'-triphosphate = RNA(n+1) + diphosphate. Its function is as follows. DNA-dependent RNA polymerase (RNAP) catalyzes the transcription of DNA into RNA using the four ribonucleoside triphosphates as substrates. In Halobacterium salinarum (strain ATCC 700922 / JCM 11081 / NRC-1) (Halobacterium halobium), this protein is DNA-directed RNA polymerase subunit Rpo6.